A 347-amino-acid chain; its full sequence is D-fructose 1,6-bisphosphatase class 2/sedoheptulose 1,7-bisphosphatase (347 aa).

4 residues coordinate Mn(2+): D33, E57, D97, and E100. Substrate contacts are provided by residues E100 to T102, Y131, R176 to R178, and D198 to D200. Position 225 (E225) interacts with Mn(2+).

This sequence belongs to the FBPase class 2 family. Homotetramer. It depends on Mn(2+) as a cofactor.

It catalyses the reaction beta-D-fructose 1,6-bisphosphate + H2O = beta-D-fructose 6-phosphate + phosphate. It carries out the reaction D-sedoheptulose 1,7-bisphosphate + H2O = D-sedoheptulose 7-phosphate + phosphate. Its pathway is carbohydrate biosynthesis; Calvin cycle. Catalyzes the hydrolysis of fructose 1,6-bisphosphate (Fru 1,6-P2) and sedoheptulose 1,7-bisphosphate (Sed 1,7-P2) to fructose 6-phosphate and sedoheptulose 7-phosphate, respectively. In Thermosynechococcus vestitus (strain NIES-2133 / IAM M-273 / BP-1), this protein is D-fructose 1,6-bisphosphatase class 2/sedoheptulose 1,7-bisphosphatase.